A 539-amino-acid polypeptide reads, in one-letter code: MGSPEDDLIGIPFPDHSSELLSCLNEQRQLGHLCDLTIRTQGLEYRTHRAVLAACSHYFKKLFTEGGGGAVMGAGGSGTATGGAGAGVCELDFVGPEALGALLEFAYTATLTTSSANMPAVLQAARLLEIPCVIAACMEILQGSGLEAPSPDEDDCERARQYLEAFATATASGVPNGEDSPPQVPLPPPPPPPPRPVARRSRKPRKAFLQTKGARANHLVPEVPTVPAHPLTYEEEEVAGRVGSSGGSGPGDSYSPPTGTASPPEGPQSYEPYEGEEEEEELVYPPAYGLAQGGGPPLSPEELGSDEDAIDPDLMAYLSSLHQDNLAPGLDSQDKLVRKRRSQMPQECPVCHKIIHGAGKLPRHMRTHTGEKPFACEVCGVRFTRNDKLKIHMRKHTGERPYSCPHCPARFLHSYDLKNHMHLHTGDRPYECHLCHKAFAKEDHLQRHLKGQNCLEVRTRRRRKDDAPPHYPPPSTAAASPAGLDLSNGHLDTFRLSLARFWEQSAPTGPPVSTPGPPDDDEEEGAPTTPQAEGAMESS.

The BTB domain occupies 34 to 115 (CDLTIRTQGL…AYTATLTTSS (82 aa)). Phosphoserine is present on serine 150. The tract at residues 171–308 (ASGVPNGEDS…SPEELGSDED (138 aa)) is disordered. A compositionally biased stretch (pro residues) spans 182 to 196 (PQVPLPPPPPPPPRP). The span at 197–206 (VARRSRKPRK) shows a compositional bias: basic residues. 2 positions are modified to N6-acetyllysine; by EP300; alternate: lysine 206 and lysine 212. Glycyl lysine isopeptide (Lys-Gly) (interchain with G-Cter in ubiquitin); alternate cross-links involve residues lysine 206 and lysine 212. Acidic residues predominate over residues 273-282 (YEGEEEEEEL). Lysine 335 bears the N6-acetyllysine; by EP300; alternate mark. Residue lysine 335 forms a Glycyl lysine isopeptide (Lys-Gly) (interchain with G-Cter in ubiquitin); alternate linkage. The interval 344–400 (MPQECPVCHKIIHGAGKLPRHMRTHTGEKPFACEVCGVRFTRNDKLKIHMRKHTGER) is required for interaction with and acetylation by EP300. The segment at 346–368 (QECPVCHKIIHGAGKLPRHMRTH) adopts a C2H2-type 1 zinc-finger fold. Threonine 369 bears the Phosphothreonine mark. 2 C2H2-type zinc fingers span residues 374–396 (FACE…MRKH) and 402–424 (YSCP…MHLH). Residues 430–454 (YECHLCHKAFAKEDHLQRHLKGQNC) form a C2H2-type 4; atypical zinc finger. Disordered stretches follow at residues 458–486 (RTRR…GLDL) and 501–539 (FWEQ…MESS). Pro residues predominate over residues 508-517 (TGPPVSTPGP).

Homodimerizes. Interacts with NCL, NEDD4 and YBX1. Interacts with HNRNPU (via RNA-binding RGG-box region); the interaction facilitates the recruitment of long non-coding RNA Blnc1 by ZBTB7B. Interacts with HDAC4 and HDAC5; the interaction allows the recruitment of HDAC4 and HDAC5 on CD8 loci for deacetylation and possible inhibition of CD8 genes expression. Post-translationally, acetylated directly and specifically by EP300. EP300-mediated acetylation of Lys-206, Lys-212 and Lys-335 stabilizes the protein by antagonizing ubiquitin conjugation. Ubiquitinated, leading to proteasomal degradation. Competes with acetylation on Lys-206, Lys-212 and Lys-335.

The protein resides in the nucleus. Transcription regulator that acts as a key regulator of lineage commitment of immature T-cell precursors. Exerts distinct biological functions in the mammary epithelial cells and T cells in a tissue-specific manner. Necessary and sufficient for commitment of CD4 lineage, while its absence causes CD8 commitment. Development of immature T-cell precursors (thymocytes) to either the CD4 helper or CD8 killer T-cell lineages correlates precisely with their T-cell receptor specificity for major histocompatibility complex class II or class I molecules, respectively. Cross-antagonism between ZBTB7B and CBF complexes are determinative to CD4 versus CD8 cell fate decision. Suppresses RUNX3 expression and imposes CD4+ lineage fate by inducing the SOCS suppressors of cytokine signaling. induces, as a transcriptional activator, SOCS genes expression which represses RUNX3 expression and promotes the CD4+ lineage fate. During CD4 lineage commitment, associates with multiple sites at the CD8 locus, acting as a negative regulator of the CD8 promoter and enhancers by epigenetic silencing through the recruitment of class II histone deacetylases, such as HDAC4 and HDAC5, to these loci. Regulates the development of IL17-producing CD1d-restricted naural killer (NK) T cells. Also functions as an important metabolic regulator in the lactating mammary glands. Critical feed-forward regulator of insulin signaling in mammary gland lactation, directly regulates expression of insulin receptor substrate-1 (IRS-1) and insulin-induced Akt-mTOR-SREBP signaling. Transcriptional repressor of the collagen COL1A1 and COL1A2 genes. May also function as a repressor of fibronectin and possibly other extracellular matrix genes. Potent driver of brown fat development, thermogenesis and cold-induced beige fat formation. Recruits the brown fat lncRNA 1 (Blnc1):HNRNPU ribonucleoprotein complex to activate thermogenic gene expression in brown and beige adipocytes. The protein is Zinc finger and BTB domain-containing protein 7B of Homo sapiens (Human).